A 409-amino-acid chain; its full sequence is Testis-expressed protein 13A (409 aa).

Residues W92–P408 form a required for repression of transcription region. The interval G347–Y374 is disordered. Positions G348 to Q368 are enriched in basic and acidic residues. The RanBP2-type zinc-finger motif lies at R376 to G400. Positions 382, 385, 396, and 399 each coordinate Zn(2+).

It belongs to the TEX13 family. Interacts with CNOT1; the interaction may inhibit CNOT1 binding to mRNA and subsequently CNOT1-mediated mRNA degradation. In terms of tissue distribution, testis specific.

Binds to ssRNA containing the consensus sequence 5'-AGGUAA-3'. Plays a role in transcriptional repression. Required for rapid sperm motility and timely degradation of mRNA via its interaction with CNOT1. The chain is Testis-expressed protein 13A from Homo sapiens (Human).